We begin with the raw amino-acid sequence, 293 residues long: MMRIALFLLTNLAVMVVFGLVLSLTGIQSSSVQGLLIMALLFGFGGSFISLLMSKWMALKSVGGEVIEQPRNERERWLMNTVATQARQAGIAMPQVAIYHAPDINAFATGARRDASLVAVSTGLLQNMSPDEAEAVIAHEISHIANGDMVTMTLIQGVVNTFVIFISRIIAQIAAGFLGGNRDEGEGSNGNPLIYFAVATVLELVFGILASIITMWFSRYREFHADAGSAKLVGREKMIAALQRLKTSYEPQEATSMMAFCINGKSKSLSELFMTHPPLDKRIEALRSGEYLK.

2 helical membrane passes run 4-24 (IALF…VLSL) and 34-54 (GLLI…LLMS). H139 lines the Zn(2+) pocket. E140 is an active-site residue. H143 is a binding site for Zn(2+). The next 2 helical transmembrane spans lie at 158-178 (VVNT…AGFL) and 193-213 (LIYF…ASII). E222 serves as a coordination point for Zn(2+).

The protein belongs to the peptidase M48B family. Zn(2+) is required as a cofactor.

The protein localises to the cell inner membrane. This Salmonella agona (strain SL483) protein is Protease HtpX.